The sequence spans 181 residues: Protein Syd (181 aa).

The protein belongs to the Syd family.

The protein localises to the cell inner membrane. Interacts with the SecY protein in vivo. May bind preferentially to an uncomplexed state of SecY, thus functioning either as a chelating agent for excess SecY in the cell or as a regulatory factor that negatively controls the translocase function. The protein is Protein Syd of Escherichia fergusonii (strain ATCC 35469 / DSM 13698 / CCUG 18766 / IAM 14443 / JCM 21226 / LMG 7866 / NBRC 102419 / NCTC 12128 / CDC 0568-73).